The sequence spans 127 residues: Small ribosomal subunit protein uS11 (127 aa).

It belongs to the universal ribosomal protein uS11 family. As to quaternary structure, part of the 30S ribosomal subunit. Interacts with proteins S7 and S18. Binds to IF-3.

Located on the platform of the 30S subunit, it bridges several disparate RNA helices of the 16S rRNA. Forms part of the Shine-Dalgarno cleft in the 70S ribosome. The protein is Small ribosomal subunit protein uS11 of Streptococcus pyogenes serotype M49 (strain NZ131).